Here is a 208-residue protein sequence, read N- to C-terminus: Putative 3-methyladenine DNA glycosylase (208 aa).

This sequence belongs to the DNA glycosylase MPG family.

This chain is Putative 3-methyladenine DNA glycosylase, found in Lactobacillus delbrueckii subsp. bulgaricus (strain ATCC 11842 / DSM 20081 / BCRC 10696 / JCM 1002 / NBRC 13953 / NCIMB 11778 / NCTC 12712 / WDCM 00102 / Lb 14).